Consider the following 614-residue polypeptide: Zinc finger and SCAN domain-containing protein 2 (614 aa).

Disordered regions lie at residues 1–25 (MAAE…EDEQ), 42–73 (AVLQ…EGPQ), and 162–200 (NISG…RVVP). Residues 69–127 (AEGPQGALVRFRELCRRWLRPEVHTKEQMLTVLPREIQAWLQEHRPESSEEAVALVEDL) form the SCAN box domain. 14 consecutive C2H2-type zinc fingers follow at residues 222-244 (YECP…ERTH), 250-272 (YKCD…QTTH), 278-300 (YKCR…QRIH), 306-328 (FQCA…QRTH), 334-356 (YSCP…QGIH), 362-384 (YACK…QRIH), 390-412 (YKCT…RRTH), 418-440 (YQCG…RRTH), 446-468 (YKCG…QGTH), 474-496 (YECL…QRTH), 502-524 (YRCG…QRTH), 530-552 (YKCL…QRAH), 558-580 (YRCP…QRIH), and 586-608 (YRCP…QRTH).

Belongs to the krueppel C2H2-type zinc-finger protein family. As to expression, in the adult, predominantly found in spermatids. Also present in the embryo.

Its subcellular location is the nucleus. Its function is as follows. May be involved in transcriptional regulation during the post-meiotic stages of spermatogenesis. The sequence is that of Zinc finger and SCAN domain-containing protein 2 (Zscan2) from Mus musculus (Mouse).